We begin with the raw amino-acid sequence, 474 residues long: Probable dipeptidase B (474 aa).

Cys-11 is an active-site residue.

It belongs to the peptidase C69 family.

It carries out the reaction an L-aminoacyl-L-amino acid + H2O = 2 an L-alpha-amino acid. This Lactococcus lactis subsp. lactis (strain IL1403) (Streptococcus lactis) protein is Probable dipeptidase B (pepDB).